The chain runs to 201 residues: Ras-like GTP-binding protein YPT1 (201 aa).

Residues 15–23, 33–40, 63–67, 121–124, and 151–153 contribute to the GTP site; these read GDSGVGKSC, YTESYIST, DTAGQ, NKSD, and SAK. Residues 37–45 carry the Effector region motif; that stretch reads YISTIGVDF. 2 S-geranylgeranyl cysteine lipidation sites follow: Cys200 and Cys201.

The protein belongs to the small GTPase superfamily. Rab family.

It is found in the endoplasmic reticulum membrane. The protein localises to the golgi apparatus membrane. It localises to the cytoplasm. Its subcellular location is the preautophagosomal structure membrane. Its activity is regulated as follows. Rab activation is generally mediated by a guanine exchange factor (GEF), while inactivation through hydrolysis of bound GTP is catalyzed by a GTPase activating protein (GAP). Its function is as follows. The small GTPases Rab are key regulators of intracellular membrane trafficking, from the formation of transport vesicles to their fusion with membranes. Rabs cycle between an inactive GDP-bound form and an active GTP-bound form that is able to recruit to membranes different set of downstream effectors directly responsible for vesicle formation, movement, tethering and fusion. YPT1 regulates the trafficking of secretory vesicles from the endoplasmic reticulum (ER) to the Golgi. Plays a role in the initial events of the autophagic vacuole development which take place at specialized regions of the endoplasmic reticulum. Also involved in the recycling of membrane proteins. The protein is Ras-like GTP-binding protein YPT1 (YPT1) of Phytophthora infestans (Potato late blight agent).